We begin with the raw amino-acid sequence, 354 residues long: Uroporphyrinogen decarboxylase (354 aa).

Substrate is bound by residues 27-31 (RQAGR), Asp77, Tyr154, Thr209, and His327.

Belongs to the uroporphyrinogen decarboxylase family. Homodimer.

Its subcellular location is the cytoplasm. It carries out the reaction uroporphyrinogen III + 4 H(+) = coproporphyrinogen III + 4 CO2. The protein operates within porphyrin-containing compound metabolism; protoporphyrin-IX biosynthesis; coproporphyrinogen-III from 5-aminolevulinate: step 4/4. Its function is as follows. Catalyzes the decarboxylation of four acetate groups of uroporphyrinogen-III to yield coproporphyrinogen-III. This Salmonella dublin (strain CT_02021853) protein is Uroporphyrinogen decarboxylase.